The chain runs to 876 residues: Extended synaptotagmin-2-B (876 aa).

The tract at residues Met-1–Pro-21 is disordered. Over Met-1–Gly-35 the chain is Cytoplasmic. The helical transmembrane segment at Met-36 to Phe-56 threads the bilayer. Residues Pro-57–Tyr-59 are Lumenal-facing. Residues Val-60 to Trp-80 traverse the membrane as a helical segment. The Cytoplasmic portion of the chain corresponds to Trp-81 to Ser-876. The SMP-LTD domain maps to Asp-123–Val-302. 2 consecutive C2 domains span residues Leu-301–Phe-421 and Asn-446–Asn-592. Residues Lys-332, Asp-333, Asp-345, Asp-392, Glu-393, Asp-394, Asp-396, Asp-398, and Asp-399 each coordinate Ca(2+). The disordered stretch occupies residues Val-614–Asp-714. Pro residues predominate over residues Pro-636–Pro-656. Low complexity predominate over residues Ser-686 to Ser-698. The region spanning Pro-741–Phe-863 is the C2 3 domain. Residues Lys-788–Lys-795 form a required for phosphatidylinositol 4,5-bisphosphate-dependent location at the cell membrane region.

This sequence belongs to the extended synaptotagmin family. In terms of assembly, interacts with fgfr1 that has been activated by fgf1 binding. Interacts (via C2 domains) with the AP-2 complex (via an alpha subunit). Identified in a complex with the AP-2 complex and fgfr1.

Its subcellular location is the cell membrane. The protein localises to the endoplasmic reticulum membrane. Functionally, tethers the endoplasmic reticulum to the cell membrane and promotes the formation of appositions between the endoplasmic reticulum and the cell membrane. Binds glycerophospholipids in a barrel-like domain and may play a role in cellular lipid transport. Plays a role in the rapid internalization of fgfr1 that has been activated by fgf1 binding; this occurs most likely via the AP-2 complex. Required for normal fgf signaling and the activation of downstream signaling cascades via its role in the internalization of activated fgfr1. Required for normal embryonic development via its role in fgf signaling and the downstream regulation of t/xBRA expression. The chain is Extended synaptotagmin-2-B (esyt2-b) from Xenopus laevis (African clawed frog).